The chain runs to 187 residues: Interferon beta (187 aa).

The first 21 residues, methionine 1–alanine 21, serve as a signal peptide directing secretion. Phosphotyrosine is present on tyrosine 24. Cysteine 53 and cysteine 162 form a disulfide bridge. Asparagine 76, asparagine 95, asparagine 132, and asparagine 158 each carry an N-linked (GlcNAc...) asparagine glycan.

Belongs to the alpha/beta interferon family. In terms of assembly, monomer.

It is found in the secreted. In terms of biological role, type I interferon cytokine that plays a key role in the innate immune response to infection, developing tumors and other inflammatory stimuli. Signals via binding to high-affinity (IFNAR2) and low-affinity (IFNAR1) heterodimeric receptor, activating the canonical Jak-STAT signaling pathway resulting in transcriptional activation or repression of interferon-regulated genes that encode the effectors of the interferon response, such as antiviral proteins, regulators of cell proliferation and differentiation, and immunoregulatory proteins. Signals mostly via binding to a IFNAR1-IFNAR2 heterodimeric receptor, but can also function with IFNAR1 alone and independently of Jak-STAT pathways. Elicits a wide variety of responses, including antiviral and antibacterial activities, and can regulate the development of B-cells, myelopoiesis and lipopolysaccharide (LPS)-inducible production of tumor necrosis factor. Plays a role in neuronal homeostasis by regulating dopamine turnover and protecting dopaminergic neurons: acts by promoting neuronal autophagy and alpha-synuclein clearance, thereby preventing dopaminergic neuron loss. IFNB1 is more potent than interferon-alpha (IFN-alpha) in inducing the apoptotic and antiproliferative pathways required for control of tumor cell growth. The polypeptide is Interferon beta (IFNB1) (Tachyglossus aculeatus aculeatus (Southeast Australian short-beaked echidna)).